Reading from the N-terminus, the 117-residue chain is Protein Wnt-10b (117 aa).

Residue serine 1 is the site of O-palmitoleoyl serine; by PORCN attachment. Cysteine 83 and cysteine 98 form a disulfide bridge. Asparagine 84 carries N-linked (GlcNAc...) asparagine glycosylation.

The protein belongs to the Wnt family. In terms of processing, palmitoleoylation is required for efficient binding to frizzled receptors. Depalmitoleoylation leads to Wnt signaling pathway inhibition.

The protein resides in the secreted. It localises to the extracellular space. It is found in the extracellular matrix. In terms of biological role, member of the Wnt ligand gene family that encodes for secreted proteins, which activate the Wnt signaling cascade. Involved in neurogenesis. Performs a partially redundant function with wnt1 in the formation of the midbrain-hindbrain boundary (MHB) organizer. The protein is Protein Wnt-10b (WNT-10B) of Plethodon jordani (Red-cheeked salamander).